Reading from the N-terminus, the 200-residue chain is Small ribosomal subunit protein uS5 (200 aa).

A compositionally biased stretch (basic and acidic residues) spans 1–22; sequence MAEERGEKRGRRRDRENPRDRD. The tract at residues 1–26 is disordered; sequence MAEERGEKRGRRRDRENPRDRDDESS. The S5 DRBM domain occupies 28 to 91; it reads LVDKLVGINR…EEAKRNLVRI (64 aa).

This sequence belongs to the universal ribosomal protein uS5 family. Part of the 30S ribosomal subunit. Contacts proteins S4 and S8.

Functionally, with S4 and S12 plays an important role in translational accuracy. In terms of biological role, located at the back of the 30S subunit body where it stabilizes the conformation of the head with respect to the body. This Hyphomonas neptunium (strain ATCC 15444) protein is Small ribosomal subunit protein uS5.